A 293-amino-acid chain; its full sequence is Kallikrein-5 (293 aa).

Positions 1 to 22 are cleaved as a signal peptide; sequence MATARPPWMWVLCALITALLLG. A compositionally biased stretch (polar residues) spans 37 to 49; it reads HPSNTVPSGSNQD. A disordered region spans residues 37–68; that stretch reads HPSNTVPSGSNQDLGAGAGEDARSDDSSSRII. Residues 67–290 enclose the Peptidase S1 domain; sequence IINGSDCDMH…FTKWIQETIQ (224 aa). Asn69 carries an N-linked (GlcNAc...) asparagine glycan. Intrachain disulfides connect Cys73–Cys206, Cys93–Cys109, Cys178–Cys279, Cys185–Cys251, Cys217–Cys231, and Cys241–Cys266. Active-site charge relay system residues include His108 and Asp153. 2 N-linked (GlcNAc...) asparagine glycosylation sites follow: Asn173 and Asn208. The active-site Charge relay system is the Ser245. Asn252 carries an N-linked (GlcNAc...) asparagine glycan.

The protein belongs to the peptidase S1 family. Kallikrein subfamily. Interacts with SPINK9. As to expression, expressed in skin, breast, brain and testis. Expressed at the stratum granulosum of palmar skin.

The protein localises to the secreted. Inhibited by Zn2+. Functionally, may be involved in desquamation. The polypeptide is Kallikrein-5 (Homo sapiens (Human)).